We begin with the raw amino-acid sequence, 512 residues long: Catalase (512 aa).

Catalysis depends on residues His60 and Asn133. Tyr344 is a heme binding site. The residue at position 363 (Ser363) is a Phosphoserine. Positions 488 to 505 (EVKKMEEKAPKPINKGEP) are enriched in basic and acidic residues. The interval 488 to 512 (EVKKMEEKAPKPINKGEPHMFQGSS) is disordered.

The protein belongs to the catalase family. Heme serves as cofactor.

Its subcellular location is the peroxisome matrix. It catalyses the reaction 2 H2O2 = O2 + 2 H2O. Functionally, catalyzes the degradation of hydrogen peroxide (H(2)O(2)) generated by peroxisomal oxidases to water and oxygen, thereby protecting cells from the toxic effects of hydrogen peroxide. The polypeptide is Catalase (cta1) (Schizosaccharomyces pombe (strain 972 / ATCC 24843) (Fission yeast)).